The sequence spans 314 residues: Ribonuclease Z (314 aa).

Zn(2+) is bound by residues H63, H65, D67, H68, H142, D205, and H263. D67 acts as the Proton acceptor in catalysis.

Belongs to the RNase Z family. As to quaternary structure, homodimer. Requires Zn(2+) as cofactor.

It catalyses the reaction Endonucleolytic cleavage of RNA, removing extra 3' nucleotides from tRNA precursor, generating 3' termini of tRNAs. A 3'-hydroxy group is left at the tRNA terminus and a 5'-phosphoryl group is left at the trailer molecule.. In terms of biological role, zinc phosphodiesterase, which displays some tRNA 3'-processing endonuclease activity. Probably involved in tRNA maturation, by removing a 3'-trailer from precursor tRNA. This Kineococcus radiotolerans (strain ATCC BAA-149 / DSM 14245 / SRS30216) protein is Ribonuclease Z.